A 155-amino-acid polypeptide reads, in one-letter code: SsrA-binding protein (155 aa).

The protein belongs to the SmpB family.

Its subcellular location is the cytoplasm. Its function is as follows. Required for rescue of stalled ribosomes mediated by trans-translation. Binds to transfer-messenger RNA (tmRNA), required for stable association of tmRNA with ribosomes. tmRNA and SmpB together mimic tRNA shape, replacing the anticodon stem-loop with SmpB. tmRNA is encoded by the ssrA gene; the 2 termini fold to resemble tRNA(Ala) and it encodes a 'tag peptide', a short internal open reading frame. During trans-translation Ala-aminoacylated tmRNA acts like a tRNA, entering the A-site of stalled ribosomes, displacing the stalled mRNA. The ribosome then switches to translate the ORF on the tmRNA; the nascent peptide is terminated with the 'tag peptide' encoded by the tmRNA and targeted for degradation. The ribosome is freed to recommence translation, which seems to be the essential function of trans-translation. This Streptococcus pneumoniae (strain P1031) protein is SsrA-binding protein.